Consider the following 346-residue polypeptide: MARHPRWTLSQVTELFEKPLLELLFEAQQIHRQHFDPQQVQVSTLLSIKTGACPEDCKYCPQSSRYKTGLEAERLMEVEQVLDSARKAKNAGSTRFCMGAAWKNPHERDMPYLEQIVQGVKAMGLETCMTLGMLNESQAQRLANAGLDYYNHNLDTSPEFYGNIITTRTYQERLDTLEKVREAGIKVCSGGIVGLGETVTDRAGLLLQLANLPTPPESVPINMLVKVKGTPLADNDDVDAFDFIRTIAVARIMMPTSYVRLSAGREQMNEQTQAMCFMAGANSIFYGCKLLTTPNPAEDKDLQLFRKLGLNPQQTRVLAGDNEQQQRLEQTLMTPDTDDYYNAAAL.

One can recognise a Radical SAM core domain in the interval 38-256; that stretch reads QQVQVSTLLS…IAVARIMMPT (219 aa). [4Fe-4S] cluster-binding residues include C53, C57, and C60. [2Fe-2S] cluster-binding residues include C97, C128, C188, and R260.

This sequence belongs to the radical SAM superfamily. Biotin synthase family. As to quaternary structure, homodimer. It depends on [4Fe-4S] cluster as a cofactor. The cofactor is [2Fe-2S] cluster.

It carries out the reaction (4R,5S)-dethiobiotin + (sulfur carrier)-SH + 2 reduced [2Fe-2S]-[ferredoxin] + 2 S-adenosyl-L-methionine = (sulfur carrier)-H + biotin + 2 5'-deoxyadenosine + 2 L-methionine + 2 oxidized [2Fe-2S]-[ferredoxin]. It participates in cofactor biosynthesis; biotin biosynthesis; biotin from 7,8-diaminononanoate: step 2/2. Catalyzes the conversion of dethiobiotin (DTB) to biotin by the insertion of a sulfur atom into dethiobiotin via a radical-based mechanism. This is Biotin synthase from Salmonella dublin (strain CT_02021853).